Consider the following 620-residue polypeptide: Guanylate-binding protein 3 (620 aa).

The GTPase domain (Globular) stretch occupies residues 1–304; that stretch reads MEAPICLVEN…NAINSGTVPC (304 aa). The GB1/RHD3-type G domain occupies 29–271; the sequence is AQPLVVVAIV…FCSYIFTNGK (243 aa). Residues 39 to 46, 61 to 63, and 91 to 95 contribute to the GTP site; these read GLYRTGKS, LGS, and DTEGL. Coiled-coil stretches lie at residues 375–411 and 477–582; these read KKLVVTIEERKEEFIRQNEAASIRHCQAELERLSESL and DGER…TRRK.

The protein belongs to the TRAFAC class dynamin-like GTPase superfamily. GB1/RHD3 GTPase family. GB1 subfamily. Heterodimer with other family members, including GBP1, GBP2 and GBP5. Dimerization regulates subcellular location. In terms of tissue distribution, brain, lung, heart, spleen, kidney, liver and intestine.

It is found in the cytoplasm. Its subcellular location is the perinuclear region. The protein resides in the golgi apparatus membrane. The catalysed reaction is GTP + H2O = GDP + phosphate + H(+). Its function is as follows. Interferon (IFN)-inducible GTPase that plays important roles in innate immunity against a diverse range of bacterial, viral and protozoan pathogens. Hydrolyzes GTP very efficiently; GDP rather than GMP is the major reaction product. Following infection, recruited to the pathogen-containing vacuoles or vacuole-escaped bacteria and acts as a positive regulator of inflammasome assembly by promoting the release of inflammasome ligands from bacteria. Acts by promoting lysis of pathogen-containing vacuoles, releasing pathogens into the cytosol. Following pathogen release in the cytosol, promotes recruitment of proteins that mediate bacterial cytolysis, such as Gm12250/Irgb10: this liberates ligands that are detected by inflammasomes, such as lipopolysaccharide (LPS) that activates the non-canonical CASP4/CASP11 inflammasome or double-stranded DNA (dsDNA) that activates the AIM2 inflammasome. May play a role in erythroid differentiation. The polypeptide is Guanylate-binding protein 3 (Mus musculus (Mouse)).